A 273-amino-acid chain; its full sequence is Dermonecrotic toxin LdSicTox-alphaIB1aiv (273 aa).

The active site involves histidine 5. Positions 25 and 27 each coordinate Mg(2+). Histidine 41 serves as the catalytic Nucleophile. Cystine bridges form between cysteine 45-cysteine 51 and cysteine 47-cysteine 190. Mg(2+) is bound at residue aspartate 85. Asparagine 250 carries N-linked (GlcNAc...) asparagine glycosylation.

The protein belongs to the arthropod phospholipase D family. Class II subfamily. Requires Mg(2+) as cofactor. In terms of tissue distribution, expressed by the venom gland.

Its subcellular location is the secreted. The catalysed reaction is an N-(acyl)-sphingosylphosphocholine = an N-(acyl)-sphingosyl-1,3-cyclic phosphate + choline. The enzyme catalyses an N-(acyl)-sphingosylphosphoethanolamine = an N-(acyl)-sphingosyl-1,3-cyclic phosphate + ethanolamine. It catalyses the reaction a 1-acyl-sn-glycero-3-phosphocholine = a 1-acyl-sn-glycero-2,3-cyclic phosphate + choline. It carries out the reaction a 1-acyl-sn-glycero-3-phosphoethanolamine = a 1-acyl-sn-glycero-2,3-cyclic phosphate + ethanolamine. Functionally, dermonecrotic toxins cleave the phosphodiester linkage between the phosphate and headgroup of certain phospholipids (sphingolipid and lysolipid substrates), forming an alcohol (often choline) and a cyclic phosphate. This toxin acts on sphingomyelin (SM). It may also act on ceramide phosphoethanolamine (CPE), lysophosphatidylcholine (LPC) and lysophosphatidylethanolamine (LPE), but not on lysophosphatidylserine (LPS), and lysophosphatidylglycerol (LPG). It acts by transphosphatidylation, releasing exclusively cyclic phosphate products as second products. Induces dermonecrosis, hemolysis, increased vascular permeability, edema, inflammatory response, and platelet aggregation. This Loxosceles deserta (Desert recluse spider) protein is Dermonecrotic toxin LdSicTox-alphaIB1aiv.